A 235-amino-acid polypeptide reads, in one-letter code: Ribonuclease HII (235 aa).

The RNase H type-2 domain occupies 23 to 212 (GLVAGVDEAG…VAHVVSIARM (190 aa)). 3 residues coordinate a divalent metal cation: aspartate 29, glutamate 30, and aspartate 121.

This sequence belongs to the RNase HII family. It depends on Mn(2+) as a cofactor. Mg(2+) serves as cofactor.

The protein resides in the cytoplasm. It catalyses the reaction Endonucleolytic cleavage to 5'-phosphomonoester.. Functionally, endonuclease that specifically degrades the RNA of RNA-DNA hybrids. This is Ribonuclease HII from Delftia acidovorans (strain DSM 14801 / SPH-1).